Consider the following 365-residue polypeptide: NAC domain-containing protein 43 (365 aa).

Residues 16–180 (VPPGFRFHPT…GWVVCRIFKK (165 aa)) form the NAC domain. Residues 116-186 (IGMRKTLVFY…IFKKKNLHKT (71 aa)) mediate DNA binding.

Expressed in various aboveground tissues undergoing thickening of the lignified secondary wall such as anthers, filaments of stamens, the base of carpels, styles, the boundaries between siliques and pedicels, the midrib of leaf veins, and inflorescence stems, specifically in interfascicular fibers (sclerenchyma), cells differentiating into vascular vessels, and xylary fibers (secondary xylem).

Its subcellular location is the nucleus. Transcription activator of genes involved in biosynthesis of secondary walls. Together with NST2 and NST3, required for the secondary cell wall thickening of sclerenchymatous fibers, secondary xylem (tracheary elements), and of the anther endocethium, which is necessary for anther dehiscence. May also regulate the secondary cell wall lignification of other tissues. In Arabidopsis thaliana (Mouse-ear cress), this protein is NAC domain-containing protein 43 (NAC043).